We begin with the raw amino-acid sequence, 284 residues long: L-ribulose-5-phosphate 3-epimerase UlaE (284 aa).

Belongs to the L-ribulose-5-phosphate 3-epimerase family.

It catalyses the reaction L-ribulose 5-phosphate = L-xylulose 5-phosphate. It participates in cofactor degradation; L-ascorbate degradation; D-xylulose 5-phosphate from L-ascorbate: step 3/4. Catalyzes the isomerization of L-xylulose-5-phosphate to L-ribulose-5-phosphate. Is involved in the anaerobic L-ascorbate utilization. In Escherichia coli (strain SMS-3-5 / SECEC), this protein is L-ribulose-5-phosphate 3-epimerase UlaE.